A 239-amino-acid chain; its full sequence is Lactate utilization protein A 2 (239 aa).

Belongs to the LutA/YkgE family.

In terms of biological role, is involved in L-lactate degradation and allows cells to grow with lactate as the sole carbon source. This is Lactate utilization protein A 2 from Bacillus mycoides (strain KBAB4) (Bacillus weihenstephanensis).